We begin with the raw amino-acid sequence, 378 residues long: Queuine tRNA-ribosyltransferase (378 aa).

Catalysis depends on aspartate 91, which acts as the Proton acceptor. Residues 91 to 95 (DSGGF), aspartate 145, glutamine 189, and glycine 216 contribute to the substrate site. An RNA binding region spans residues 247–253 (GVGKPED). Aspartate 266 functions as the Nucleophile in the catalytic mechanism. The tract at residues 271 to 275 (TRNAR) is RNA binding; important for wobble base 34 recognition. The Zn(2+) site is built by cysteine 304, cysteine 306, cysteine 309, and histidine 335.

The protein belongs to the queuine tRNA-ribosyltransferase family. As to quaternary structure, homodimer. Within each dimer, one monomer is responsible for RNA recognition and catalysis, while the other monomer binds to the replacement base PreQ1. It depends on Zn(2+) as a cofactor.

It carries out the reaction 7-aminomethyl-7-carbaguanine + guanosine(34) in tRNA = 7-aminomethyl-7-carbaguanosine(34) in tRNA + guanine. It functions in the pathway tRNA modification; tRNA-queuosine biosynthesis. In terms of biological role, catalyzes the base-exchange of a guanine (G) residue with the queuine precursor 7-aminomethyl-7-deazaguanine (PreQ1) at position 34 (anticodon wobble position) in tRNAs with GU(N) anticodons (tRNA-Asp, -Asn, -His and -Tyr). Catalysis occurs through a double-displacement mechanism. The nucleophile active site attacks the C1' of nucleotide 34 to detach the guanine base from the RNA, forming a covalent enzyme-RNA intermediate. The proton acceptor active site deprotonates the incoming PreQ1, allowing a nucleophilic attack on the C1' of the ribose to form the product. After dissociation, two additional enzymatic reactions on the tRNA convert PreQ1 to queuine (Q), resulting in the hypermodified nucleoside queuosine (7-(((4,5-cis-dihydroxy-2-cyclopenten-1-yl)amino)methyl)-7-deazaguanosine). The chain is Queuine tRNA-ribosyltransferase from Vibrio vulnificus (strain CMCP6).